The chain runs to 163 residues: PTS system fructose-specific EIIB component (163 aa).

A PTS EIIB type-4 domain is found at 1 to 163; that stretch reads MMNIVLARID…FVQILRNVTK (163 aa). The active-site Pros-phosphohistidine intermediate is histidine 15. Histidine 15 is subject to Phosphohistidine; by EIIA.

It is found in the cytoplasm. It carries out the reaction D-fructose(out) + N(pros)-phospho-L-histidyl-[protein] = D-fructose 1-phosphate(in) + L-histidyl-[protein]. The phosphoenolpyruvate-dependent sugar phosphotransferase system (sugar PTS), a major carbohydrate active -transport system, catalyzes the phosphorylation of incoming sugar substrates concomitantly with their translocation across the cell membrane. The enzyme II LevDE PTS system is involved in fructose transport. Its function is as follows. LevD and LevE act as negative regulators of the levanase operon. They may be involved in a PTS-mediated phosphorylation of a regulator. This Bacillus subtilis (strain 168) protein is PTS system fructose-specific EIIB component.